The sequence spans 284 residues: Bifunctional protein FolD (284 aa).

NADP(+) contacts are provided by residues 166-168, serine 191, and isoleucine 232; that span reads GAS.

This sequence belongs to the tetrahydrofolate dehydrogenase/cyclohydrolase family. Homodimer.

The enzyme catalyses (6R)-5,10-methylene-5,6,7,8-tetrahydrofolate + NADP(+) = (6R)-5,10-methenyltetrahydrofolate + NADPH. It carries out the reaction (6R)-5,10-methenyltetrahydrofolate + H2O = (6R)-10-formyltetrahydrofolate + H(+). The protein operates within one-carbon metabolism; tetrahydrofolate interconversion. Functionally, catalyzes the oxidation of 5,10-methylenetetrahydrofolate to 5,10-methenyltetrahydrofolate and then the hydrolysis of 5,10-methenyltetrahydrofolate to 10-formyltetrahydrofolate. This Neisseria meningitidis serogroup A / serotype 4A (strain DSM 15465 / Z2491) protein is Bifunctional protein FolD.